We begin with the raw amino-acid sequence, 91 residues long: uncharacterized protein (91 aa).

2 helical membrane passes run 22 to 42 and 53 to 73; these read WPVI…AFVV and VAGL…LAAA.

Its subcellular location is the cell membrane. This is an uncharacterized protein from Mycobacterium bovis (strain ATCC BAA-935 / AF2122/97).